A 307-amino-acid chain; its full sequence is Methionyl-tRNA formyltransferase (307 aa).

Residue 109 to 112 (SLLP) participates in (6S)-5,6,7,8-tetrahydrofolate binding.

This sequence belongs to the Fmt family.

It catalyses the reaction L-methionyl-tRNA(fMet) + (6R)-10-formyltetrahydrofolate = N-formyl-L-methionyl-tRNA(fMet) + (6S)-5,6,7,8-tetrahydrofolate + H(+). In terms of biological role, attaches a formyl group to the free amino group of methionyl-tRNA(fMet). The formyl group appears to play a dual role in the initiator identity of N-formylmethionyl-tRNA by promoting its recognition by IF2 and preventing the misappropriation of this tRNA by the elongation apparatus. This chain is Methionyl-tRNA formyltransferase, found in Dechloromonas aromatica (strain RCB).